Reading from the N-terminus, the 275-residue chain is Large ribosomal subunit protein uL2 (275 aa).

Residues 223–275 form a disordered region; the sequence is VAMNPIDHPHGGGEGRTGEAREPVSPWGTPSKGYKTRRNKRTNNMIVQRRKRK. Residues 229-244 show a composition bias toward basic and acidic residues; it reads DHPHGGGEGRTGEARE.

It belongs to the universal ribosomal protein uL2 family. Part of the 50S ribosomal subunit. Forms a bridge to the 30S subunit in the 70S ribosome.

One of the primary rRNA binding proteins. Required for association of the 30S and 50S subunits to form the 70S ribosome, for tRNA binding and peptide bond formation. It has been suggested to have peptidyltransferase activity; this is somewhat controversial. Makes several contacts with the 16S rRNA in the 70S ribosome. The protein is Large ribosomal subunit protein uL2 of Bordetella avium (strain 197N).